Reading from the N-terminus, the 202-residue chain is Transmembrane protein 223 (202 aa).

Over 1–43 (MAAPWRRWPTGLLAVLRPLLTCRPLQGTTLQRDVLLFEHDRGR) the chain is Mitochondrial matrix. The helical transmembrane segment at 44–64 (FFTILGLFCAGQGVFWASMAV) threads the bilayer. Residues 65–97 (AAVSRPPVPVQPLDAEVPNRGPFDLRSALWRYG) lie on the Mitochondrial intermembrane side of the membrane. The chain crosses the membrane as a helical span at residues 98–118 (LAVGCGAIGALVLGAGLLFSL). The Mitochondrial matrix portion of the chain corresponds to 119–202 (RSVRSVVLRA…DNTVGAYRSL (84 aa)).

It belongs to the TMEM223 family. Associates with the mitochondrial ribosome.

Its subcellular location is the mitochondrion inner membrane. Mitochondrial ribosome-associated protein involved in the first steps of cytochrome c oxidase complex (complex IV) biogenesis. Stimulates the translation of MT-CO1 mRNA and is a constituent of early MT-CO1 assembly intermediates. This chain is Transmembrane protein 223, found in Homo sapiens (Human).